We begin with the raw amino-acid sequence, 232 residues long: Ethylene-responsive transcription factor ERF025 (232 aa).

The span at 1–29 (MSNNNNSPTTVNQETTTSREVSITLPTDQ) shows a compositional bias: polar residues. The tract at residues 1–63 (MSNNNNSPTT…TATGLSGKHS (63 aa)) is disordered. Low complexity predominate over residues 30-50 (SPQTSPGSSSSPSPRPSGGSP). Positions 64-120 (IFRGIRLRNGKWVSEIREPRKTTRIWLGTYPVPEMAAAAYDVAALALKGPDAVLNFP) form a DNA-binding region, AP2/ERF. Residues 213-232 (PTMEDDSPENHEGDNLWSYK) are disordered.

The protein belongs to the AP2/ERF transcription factor family. ERF subfamily.

The protein resides in the nucleus. Its function is as follows. Probably acts as a transcriptional activator. Binds to the GCC-box pathogenesis-related promoter element. May be involved in the regulation of gene expression by stress factors and by components of stress signal transduction pathways. The sequence is that of Ethylene-responsive transcription factor ERF025 (ERF025) from Arabidopsis thaliana (Mouse-ear cress).